A 380-amino-acid chain; its full sequence is Chaperone protein DnaJ (380 aa).

The disordered stretch occupies residues 1–48 (MAKKDYYDTLGVPKNASDDDIKKAYRKLAMKHHPDRNQGDKSKVSEEK). The 68-residue stretch at 5–72 (DYYDTLGVPK…NKRMAYDQYG (68 aa)) folds into the J domain. A compositionally biased stretch (basic residues) spans 24–34 (AYRKLAMKHHP). The span at 35–48 (DRNQGDKSKVSEEK) shows a compositional bias: basic and acidic residues. The segment at 139–217 (GKEAQIRIPS…CHGVGKTKNN (79 aa)) adopts a CR-type zinc-finger fold. Zn(2+) contacts are provided by C152, C155, C169, C172, C191, C194, C205, and C208. CXXCXGXG motif repeat units lie at residues 152 to 159 (CNTCHGSG), 169 to 176 (CTTCHGHG), 191 to 198 (CPQCKGTG), and 205 to 212 (CVACHGVG). Residues 357-380 (KKGGARHSPSEEGWADKLKSFFSA) are disordered. Residues 364 to 380 (SPSEEGWADKLKSFFSA) are compositionally biased toward basic and acidic residues.

The protein belongs to the DnaJ family. Homodimer. The cofactor is Zn(2+).

It localises to the cytoplasm. In terms of biological role, participates actively in the response to hyperosmotic and heat shock by preventing the aggregation of stress-denatured proteins and by disaggregating proteins, also in an autonomous, DnaK-independent fashion. Unfolded proteins bind initially to DnaJ; upon interaction with the DnaJ-bound protein, DnaK hydrolyzes its bound ATP, resulting in the formation of a stable complex. GrpE releases ADP from DnaK; ATP binding to DnaK triggers the release of the substrate protein, thus completing the reaction cycle. Several rounds of ATP-dependent interactions between DnaJ, DnaK and GrpE are required for fully efficient folding. Also involved, together with DnaK and GrpE, in the DNA replication of plasmids through activation of initiation proteins. In Polaromonas sp. (strain JS666 / ATCC BAA-500), this protein is Chaperone protein DnaJ.